The sequence spans 469 residues: MKTLILTLLSLYELQLCCGAYNQNIRSQRKFEMIKTEISSYKDVAKSIIDLAVHGKAQNRSYERLALFVDTVGNRMSGSENLKTAIAYMYKSLQEDDLDRVYLEPVKVPHWERGEESAMLLEPRKKSLAILGLGGSIGTPVEGISAEVIVVSSFAELHNRSKEAKGKIVVYNEPFVNYGETVRYRGSGAVEAAKVGAVASLIRSVTPLSVYSPHTGWQWYENDVPKIPTASITVEDAEMLSRMASRGLKIVIQLKMGAVNHPDADSYNTVAEIVGSKYPEQVVIVSGHLDSWDVGQGAMDDGGGAFISWEALSLIKDLGLRPKRTLRLVLWTGEEQGGVGASQYYELHKKNISNIDLVMESDIGTFMPLGMQFTGKPEARAIMTEVMQLLQPINITSLYDYAEGTDINSWMQAGVPGASLFDDISKYFWFHHSQGDTMTVQDPVWMNLCAAVWTVVSYVVADMEEMLPR.

Positions 1 to 19 are cleaved as a signal peptide; that stretch reads MKTLILTLLSLYELQLCCG. The propeptide occupies 20-42; that stretch reads AYNQNIRSQRKFEMIKTEISSYK. 2 N-linked (GlcNAc...) asparagine glycosylation sites follow: Asn59 and Asn159. His288 and Asp300 together coordinate Zn(2+). Glu334 functions as the Nucleophile in the catalytic mechanism. Residue Glu335 participates in Zn(2+) binding. Asn351 is a glycosylation site (N-linked (GlcNAc...) asparagine). Asp362 contacts Zn(2+). A glycan (N-linked (GlcNAc...) asparagine) is linked at Asn394. Position 432 (His432) interacts with Zn(2+).

The protein belongs to the peptidase M28 family. In terms of assembly, homodimer. The monomeric form is inactive while the homodimer is active.

The protein resides in the endoplasmic reticulum. The protein localises to the golgi apparatus. It localises to the lysosome. Its subcellular location is the secreted. Its function is as follows. Carboxypeptidase that may play an important role in the hydrolysis of circulating peptides. Catalyzes more efficiently the hydrolysis of dipeptides with unsubstituted terminals into amino acids. The protein is Carboxypeptidase Q (cpq) of Xenopus laevis (African clawed frog).